We begin with the raw amino-acid sequence, 365 residues long: Aminomethyltransferase (365 aa).

The protein belongs to the GcvT family. As to quaternary structure, the glycine cleavage system is composed of four proteins: P, T, L and H.

The catalysed reaction is N(6)-[(R)-S(8)-aminomethyldihydrolipoyl]-L-lysyl-[protein] + (6S)-5,6,7,8-tetrahydrofolate = N(6)-[(R)-dihydrolipoyl]-L-lysyl-[protein] + (6R)-5,10-methylene-5,6,7,8-tetrahydrofolate + NH4(+). In terms of biological role, the glycine cleavage system catalyzes the degradation of glycine. The sequence is that of Aminomethyltransferase from Chlorobium phaeovibrioides (strain DSM 265 / 1930) (Prosthecochloris vibrioformis (strain DSM 265)).